The following is a 206-amino-acid chain: Large ribosomal subunit protein uL4 (206 aa).

A disordered region spans residues 42 to 94; sequence RRQQGSHKAQGRGDVSRTGSKMYKQKGTGRARHHSARAPQFRGGGQAHGPVVR. Residues 64 to 77 show a composition bias toward basic residues; it reads YKQKGTGRARHHSA.

This sequence belongs to the universal ribosomal protein uL4 family. Part of the 50S ribosomal subunit.

Functionally, one of the primary rRNA binding proteins, this protein initially binds near the 5'-end of the 23S rRNA. It is important during the early stages of 50S assembly. It makes multiple contacts with different domains of the 23S rRNA in the assembled 50S subunit and ribosome. Its function is as follows. Forms part of the polypeptide exit tunnel. This is Large ribosomal subunit protein uL4 from Brucella abortus biovar 1 (strain 9-941).